The sequence spans 64 residues: MAQEQTKRGGGGGDDEDVTGTTAAGQERRKKLAQDTDDLLDEIDDVLEENAEDFVRAYVQKGGQ.

The segment at 1–36 (MAQEQTKRGGGGGDDEDVTGTTAAGQERRKKLAQDT) is disordered. The interval 21 to 58 (TTAAGQERRKKLAQDTDDLLDEIDDVLEENAEDFVRAY) is ARC ATPase binding. Residues 26–52 (QERRKKLAQDTDDLLDEIDDVLEENAE) are a coiled coil. Gln-64 is modified (deamidated glutamine). Gln-64 is covalently cross-linked (Isoglutamyl lysine isopeptide (Gln-Lys) (interchain with K-? in acceptor proteins)).

Belongs to the prokaryotic ubiquitin-like protein family. In terms of assembly, strongly interacts with the proteasome-associated ATPase ARC through a hydrophobic interface; the interacting region of Pup lies in its C-terminal half. There is one Pup binding site per ARC hexamer ring. Post-translationally, is modified by deamidation of its C-terminal glutamine to glutamate by the deamidase Dop, a prerequisite to the subsequent pupylation process.

It functions in the pathway protein degradation; proteasomal Pup-dependent pathway. Protein modifier that is covalently attached to lysine residues of substrate proteins, thereby targeting them for proteasomal degradation. The tagging system is termed pupylation. This Mycobacterium ulcerans (strain Agy99) protein is Prokaryotic ubiquitin-like protein Pup.